A 172-amino-acid chain; its full sequence is Adenine phosphoribosyltransferase (172 aa).

This sequence belongs to the purine/pyrimidine phosphoribosyltransferase family. In terms of assembly, homodimer.

It localises to the cytoplasm. The enzyme catalyses AMP + diphosphate = 5-phospho-alpha-D-ribose 1-diphosphate + adenine. The protein operates within purine metabolism; AMP biosynthesis via salvage pathway; AMP from adenine: step 1/1. In terms of biological role, catalyzes a salvage reaction resulting in the formation of AMP, that is energically less costly than de novo synthesis. The polypeptide is Adenine phosphoribosyltransferase (Methanococcus maripaludis (strain DSM 14266 / JCM 13030 / NBRC 101832 / S2 / LL)).